The sequence spans 200 residues: Methylamine utilization protein MauD (200 aa).

A helical membrane pass occupies residues 4–24 (FLIASNILLWLAFLGVTVVML). The 135-residue stretch at 49–183 (PDIGDAAPEF…LESLLEADRT (135 aa)) folds into the Thioredoxin domain.

The protein resides in the membrane. The protein operates within one-carbon metabolism; methylamine degradation. May be specifically involved in the processing, transport, and/or maturation of the MADH beta-subunit. In Paracoccus denitrificans, this protein is Methylamine utilization protein MauD (mauD).